Here is a 94-residue protein sequence, read N- to C-terminus: Small ribosomal subunit protein bS6 (94 aa).

This sequence belongs to the bacterial ribosomal protein bS6 family.

In terms of biological role, binds together with bS18 to 16S ribosomal RNA. This chain is Small ribosomal subunit protein bS6, found in Alkaliphilus metalliredigens (strain QYMF).